The primary structure comprises 774 residues: Protein translocase subunit SecA 2 (774 aa).

Residues Gln-94, 112-116, and Asp-501 each bind ATP; that span reads GEGKT.

Belongs to the SecA family. Monomer and homodimer. Part of the essential Sec protein translocation apparatus which comprises SecA, SecYEG and auxiliary proteins SecDF. Other proteins may also be involved.

Its subcellular location is the cell membrane. It localises to the cytoplasm. The enzyme catalyses ATP + H2O + cellular proteinSide 1 = ADP + phosphate + cellular proteinSide 2.. Its function is as follows. Part of the Sec protein translocase complex. Interacts with the SecYEG preprotein conducting channel. Has a central role in coupling the hydrolysis of ATP to the transfer of proteins into and across the cell membrane, serving as an ATP-driven molecular motor driving the stepwise translocation of polypeptide chains across the membrane. In Mycobacterium sp. (strain JLS), this protein is Protein translocase subunit SecA 2.